We begin with the raw amino-acid sequence, 133 residues long: uncharacterized protein (133 aa).

This is an uncharacterized protein from Mycobacterium tuberculosis (strain CDC 1551 / Oshkosh).